Here is a 389-residue protein sequence, read N- to C-terminus: LL-diaminopimelate aminotransferase (389 aa).

Residues Tyr-16 and Gly-41 each contribute to the substrate site. Residues Tyr-70, 104–105 (SK), Tyr-129, Asn-179, Tyr-210, and 239–241 (SLS) contribute to the pyridoxal 5'-phosphate site. 3 residues coordinate substrate: Lys-105, Tyr-129, and Asn-179. Lys-242 carries the post-translational modification N6-(pyridoxal phosphate)lysine. Arg-250 contributes to the pyridoxal 5'-phosphate binding site. Arg-369 is a substrate binding site.

It belongs to the class-I pyridoxal-phosphate-dependent aminotransferase family. LL-diaminopimelate aminotransferase subfamily. In terms of assembly, homodimer. Requires pyridoxal 5'-phosphate as cofactor.

It catalyses the reaction (2S,6S)-2,6-diaminopimelate + 2-oxoglutarate = (S)-2,3,4,5-tetrahydrodipicolinate + L-glutamate + H2O + H(+). The protein operates within amino-acid biosynthesis; L-lysine biosynthesis via DAP pathway; LL-2,6-diaminopimelate from (S)-tetrahydrodipicolinate (aminotransferase route): step 1/1. Its function is as follows. Involved in the synthesis of meso-diaminopimelate (m-DAP or DL-DAP), required for both lysine and peptidoglycan biosynthesis. Catalyzes the direct conversion of tetrahydrodipicolinate to LL-diaminopimelate. The polypeptide is LL-diaminopimelate aminotransferase (Nitratidesulfovibrio vulgaris (strain DSM 19637 / Miyazaki F) (Desulfovibrio vulgaris)).